Here is a 61-residue protein sequence, read N- to C-terminus: Probable tautomerase BH3814 (61 aa).

The active-site Proton acceptor; via imino nitrogen is Pro2.

The protein belongs to the 4-oxalocrotonate tautomerase family.

This is Probable tautomerase BH3814 from Halalkalibacterium halodurans (strain ATCC BAA-125 / DSM 18197 / FERM 7344 / JCM 9153 / C-125) (Bacillus halodurans).